Consider the following 88-residue polypeptide: Small ribosomal subunit protein uS15 (88 aa).

This sequence belongs to the universal ribosomal protein uS15 family. In terms of assembly, part of the 30S ribosomal subunit. Forms a bridge to the 50S subunit in the 70S ribosome, contacting the 23S rRNA.

Its function is as follows. One of the primary rRNA binding proteins, it binds directly to 16S rRNA where it helps nucleate assembly of the platform of the 30S subunit by binding and bridging several RNA helices of the 16S rRNA. Functionally, forms an intersubunit bridge (bridge B4) with the 23S rRNA of the 50S subunit in the ribosome. This is Small ribosomal subunit protein uS15 from Psychrobacter arcticus (strain DSM 17307 / VKM B-2377 / 273-4).